The following is a 29-amino-acid chain: Trypsin inhibitor 2 (29 aa).

Intrachain disulfides connect Cys-3–Cys-20, Cys-10–Cys-22, and Cys-16–Cys-28.

It belongs to the protease inhibitor I7 (squash-type serine protease inhibitor) family.

The protein localises to the secreted. Its function is as follows. Inhibits trypsin. The protein is Trypsin inhibitor 2 of Bryonia dioica (Red bryony).